The primary structure comprises 132 residues: Small ribosomal subunit protein uS8 (132 aa).

It belongs to the universal ribosomal protein uS8 family. As to quaternary structure, part of the 30S ribosomal subunit. Contacts proteins S5 and S12.

Functionally, one of the primary rRNA binding proteins, it binds directly to 16S rRNA central domain where it helps coordinate assembly of the platform of the 30S subunit. This is Small ribosomal subunit protein uS8 from Micrococcus luteus (strain ATCC 4698 / DSM 20030 / JCM 1464 / CCM 169 / CCUG 5858 / IAM 1056 / NBRC 3333 / NCIMB 9278 / NCTC 2665 / VKM Ac-2230) (Micrococcus lysodeikticus).